A 305-amino-acid polypeptide reads, in one-letter code: Glutaminase (305 aa).

Positions 61, 113, 158, 165, 189, 241, and 259 each coordinate substrate.

Belongs to the glutaminase family. As to quaternary structure, homotetramer.

It catalyses the reaction L-glutamine + H2O = L-glutamate + NH4(+). This Clostridium botulinum (strain Loch Maree / Type A3) protein is Glutaminase.